The sequence spans 148 residues: Snaclec 27 (148 aa).

The signal sequence occupies residues 1–23; it reads WGDSSSSASACWSCFSLVSGIGA. 3 cysteine pairs are disulfide-bonded: cysteine 27/cysteine 38, cysteine 55/cysteine 144, and cysteine 121/cysteine 136. In terms of domain architecture, C-type lectin spans 34–145; that stretch reads HEGHCYKVFS…CSSTQQFVCK (112 aa).

It belongs to the snaclec family. Heterodimer; disulfide-linked. In terms of tissue distribution, expressed by the venom gland.

The protein resides in the secreted. Functionally, interferes with one step of hemostasis (modulation of platelet aggregation, or coagulation cascade, for example). The chain is Snaclec 27 from Echis ocellatus (Ocellated saw-scaled viper).